Here is a 499-residue protein sequence, read N- to C-terminus: Ethanolamine-phosphate phospho-lyase (499 aa).

Position 278 is an N6-(pyridoxal phosphate)lysine (K278). The segment covering 468 to 479 has biased composition (basic and acidic residues); sequence RDSTTDSKENPS. A disordered region spans residues 468 to 499; sequence RDSTTDSKENPSRKRNGMCTDTHSLLSKRLKT.

It belongs to the class-III pyridoxal-phosphate-dependent aminotransferase family. Homotetramer. Pyridoxal 5'-phosphate is required as a cofactor.

The protein resides in the mitochondrion. It catalyses the reaction phosphoethanolamine + H2O = acetaldehyde + NH4(+) + phosphate. Catalyzes the pyridoxal-phosphate-dependent breakdown of phosphoethanolamine, converting it to ammonia, inorganic phosphate and acetaldehyde. This is Ethanolamine-phosphate phospho-lyase (ETNPPL) from Homo sapiens (Human).